Here is a 608-residue protein sequence, read N- to C-terminus: MNHFPKLLSSQIGFDVAQTMLENFDRHYRIFREAAVDAKTLYERADWHGLQRLARERITSYDDRVQECVEVLQDEYDAENIDDEVWQQIKLHYIGLLTSHRQPECAETFFNSVCCKILHRSYFNNDFIFVRPAISTEYLENDEPAAKPTYRAYYPGTDGLAATLERIVTNFQLEPPFEDLTRDIGCVMQAITDEFGEFDAAPNFQIHVLSSLFFRNKSAYIVGRIINADRVLPFAVPIRHVRPGLLALDTVLLRRDLLQIIFSFSHSYFLVDMGVPSAYVDFLCTIMPGKPKAEIYTSVGLQKQGKNLFYRDLLHHLSHSSDRFIIAPGIKGLVMLVFTLPSFPYVFKIIKDHFPPPKETTREQIMEKYQLVKRHDRLGRMADTLEYSSVALPISRLDHALVRELEKEVPSLLEYEDGNLVIKHLYIERRMIPLNLYLQNGTDAEIEHGVKEYGNAVKELMKANIFPGDMLYKNFGVTRHGRVVFYDYDEIEYLTDCNVRRVPPPRNEEDELSGEPWYTVGPHDIFPETYGPFLLGDPRVRAVFMKHHADFFEASLWQASKDKLLQGELPDFYPYDVSLRFSVRYPDRFDSTPDAGDGDSAGDAQRAA.

ATP is bound by residues 327–333 (APGIKGL) and K348. D383 is a catalytic residue. The segment at 589–608 (FDSTPDAGDGDSAGDAQRAA) is disordered.

It belongs to the AceK family.

The protein resides in the cytoplasm. It carries out the reaction L-seryl-[isocitrate dehydrogenase] + ATP = O-phospho-L-seryl-[isocitrate dehydrogenase] + ADP + H(+). Its function is as follows. Bifunctional enzyme which can phosphorylate or dephosphorylate isocitrate dehydrogenase (IDH) on a specific serine residue. This is a regulatory mechanism which enables bacteria to bypass the Krebs cycle via the glyoxylate shunt in response to the source of carbon. When bacteria are grown on glucose, IDH is fully active and unphosphorylated, but when grown on acetate or ethanol, the activity of IDH declines drastically concomitant with its phosphorylation. This Burkholderia ambifaria (strain MC40-6) protein is Isocitrate dehydrogenase kinase/phosphatase.